A 1615-amino-acid polypeptide reads, in one-letter code: Ferredoxin-dependent glutamate synthase, chloroplastic (1615 aa).

The N-terminal 52 residues, 1 to 52 (MATLPRAAAAAAPSPAAALLPLPRAAPLLAGRAAARSAARRLRARGTRAPPL), are a transit peptide targeting the chloroplast. Cysteine 97 (nucleophile) is an active-site residue. The region spanning 97–496 (CGVGFVANLK…PGMMITVDLQ (400 aa)) is the Glutamine amidotransferase type-2 domain. 1175-1232 (LSETHQTLIQNGLRERVVLRVDGGFRSGLDVLMAAAMGADEYGFGSVAMIATGCVMAR) contacts FMN. [3Fe-4S] cluster is bound by residues cysteine 1228, cysteine 1234, and cysteine 1239.

It belongs to the glutamate synthase family. It depends on [3Fe-4S] cluster as a cofactor. The cofactor is FAD. FMN is required as a cofactor. Expressed in leaf blades and at lower levels in roots.

Its subcellular location is the plastid. The protein resides in the chloroplast. It catalyses the reaction 2 oxidized [2Fe-2S]-[ferredoxin] + 2 L-glutamate = L-glutamine + 2 reduced [2Fe-2S]-[ferredoxin] + 2-oxoglutarate + 2 H(+). It functions in the pathway amino-acid biosynthesis; L-glutamate biosynthesis via GLT pathway; L-glutamate from 2-oxoglutarate and L-glutamine (ferredoxin route): step 1/1. It participates in energy metabolism; nitrogen metabolism. Involved in glutamate biosynthesis in leaf. Required for the reassimilation of ammonium ions generated during photorespiration. This Oryza sativa subsp. japonica (Rice) protein is Ferredoxin-dependent glutamate synthase, chloroplastic (GLU).